A 502-amino-acid polypeptide reads, in one-letter code: Mannitol 2-dehydrogenase (502 aa).

37 to 48 (IVHIGVGGFHRA) lines the NAD(+) pocket.

Belongs to the mannitol dehydrogenase family. In terms of assembly, monomer.

The catalysed reaction is D-mannitol + NAD(+) = D-fructose + NADH + H(+). In terms of biological role, catalyzes the NAD(H)-dependent interconversion of D-fructose and D-mannitol in the mannitol metabolic pathway. This chain is Mannitol 2-dehydrogenase, found in Emericella nidulans (strain FGSC A4 / ATCC 38163 / CBS 112.46 / NRRL 194 / M139) (Aspergillus nidulans).